We begin with the raw amino-acid sequence, 612 residues long: Alpha-glycerophosphate oxidase (612 aa).

Residue 21–49 (DLLIIGGGITGAGVALQAAASGLDTGLIE) participates in FAD binding. Positions 398–408 (VETSTSEKELD) are enriched in basic and acidic residues. The tract at residues 398–418 (VETSTSEKELDPSAVSRGSSF) is disordered.

It belongs to the FAD-dependent glycerol-3-phosphate dehydrogenase family. It depends on FAD as a cofactor.

It is found in the cytoplasm. It catalyses the reaction sn-glycerol 3-phosphate + O2 = dihydroxyacetone phosphate + H2O2. The sequence is that of Alpha-glycerophosphate oxidase (glpO) from Streptococcus pyogenes serotype M18 (strain MGAS8232).